The chain runs to 1204 residues: DNA-directed RNA polymerase subunit beta' (1204 aa).

Zn(2+) contacts are provided by Cys60, Cys62, Cys75, and Cys78. Mg(2+)-binding residues include Asp449, Asp451, and Asp453. Residues Cys819, Cys893, Cys900, and Cys903 each coordinate Zn(2+).

The protein belongs to the RNA polymerase beta' chain family. The RNAP catalytic core consists of 2 alpha, 1 beta, 1 beta' and 1 omega subunit. When a sigma factor is associated with the core the holoenzyme is formed, which can initiate transcription. Requires Mg(2+) as cofactor. It depends on Zn(2+) as a cofactor.

The catalysed reaction is RNA(n) + a ribonucleoside 5'-triphosphate = RNA(n+1) + diphosphate. DNA-dependent RNA polymerase catalyzes the transcription of DNA into RNA using the four ribonucleoside triphosphates as substrates. This chain is DNA-directed RNA polymerase subunit beta', found in Bacillus cytotoxicus (strain DSM 22905 / CIP 110041 / 391-98 / NVH 391-98).